The chain runs to 347 residues: sn-1 oleoyl-lipid 12-desaturase (347 aa).

2 helical membrane passes run 41 to 63 (AWSRVLLSVAAVVGCYALLAIAP) and 67 to 85 (LLPVWFLTGTTLTGFFVIG). The Histidine box-1 signature appears at 86-90 (HDCGH). Residues 98–118 (WVNNLVGHLAFLPLIYPFHSW) form a helical membrane-spanning segment. The short motif at 122–126 (HNHHH) is the Histidine box-2 element. 3 consecutive transmembrane segments (helical) span residues 164-184 (LWWLASVIHQLKLHFNWFAFE), 196-216 (LFVIIAGAIAFPVMFYTLGVW), and 218-238 (VVKFWLMPWLGYHFWMSTFTL). Residues 286–290 (HHLST) carry the Histidine box-3 motif.

The protein belongs to the fatty acid desaturase type 2 family. The cofactor is Fe(2+).

It is found in the membrane. The enzyme catalyses a 1-[(9Z)-octadecenoyl]-2-acyl-glycerolipid + 2 reduced [2Fe-2S]-[ferredoxin] + O2 + 2 H(+) = a 1-[(9Z,12Z)-octadecdienoyl]-2-acyl-glycerolipid + 2 oxidized [2Fe-2S]-[ferredoxin] + 2 H2O. The protein operates within lipid metabolism; polyunsaturated fatty acid biosynthesis. Its function is as follows. Desaturase involved in fatty acid biosynthesis. Introduces a double bond at carbon 12 of oleoyl groups (18:1) attached to the sn-1 position of the glycerol moiety of membrane glycerolipids. Can also efficiently catalyze the desaturation of palmitoleic acid (16:1) in vitro. The polypeptide is sn-1 oleoyl-lipid 12-desaturase (Picosynechococcus sp. (strain ATCC 27264 / PCC 7002 / PR-6) (Agmenellum quadruplicatum)).